The chain runs to 691 residues: DNA topoisomerase 1 (691 aa).

Residues 3–114 (DYLVIVESPA…DCRVVFNEIT (112 aa)) enclose the Toprim domain. Positions 9 and 82 each coordinate Mg(2+). The Topo IA-type catalytic domain occupies 129 to 558 (NMDLVDAQQA…NFYTDFEKRV (430 aa)). The interaction with DNA stretch occupies residues 163–168 (SAGRVQ). Y298 acts as the O-(5'-phospho-DNA)-tyrosine intermediate in catalysis. 3 consecutive C4-type zinc fingers follow at residues 579-605 (CELC…FPDC), 619-647 (CPSC…YPDC), and 660-683 (CPKC…CVEC).

It belongs to the type IA topoisomerase family. In terms of assembly, monomer. Interacts with the RNA polymerase core. Requires Mg(2+) as cofactor.

It carries out the reaction ATP-independent breakage of single-stranded DNA, followed by passage and rejoining.. Releases the supercoiling and torsional tension of DNA, which is introduced during the DNA replication and transcription, by transiently cleaving and rejoining one strand of the DNA duplex. Introduces a single-strand break via transesterification at a target site in duplex DNA. The scissile phosphodiester is attacked by the catalytic tyrosine of the enzyme, resulting in the formation of a DNA-(5'-phosphotyrosyl)-enzyme intermediate and the expulsion of a 3'-OH DNA strand. The free DNA strand then undergoes passage around the unbroken strand, thus removing DNA supercoils. Finally, in the religation step, the DNA 3'-OH attacks the covalent intermediate to expel the active-site tyrosine and restore the DNA phosphodiester backbone. This is DNA topoisomerase 1 from Bacillus subtilis (strain 168).